A 542-amino-acid polypeptide reads, in one-letter code: Signal peptide peptidase-like 5 (542 aa).

Residues 1-23 (MAAATAAVFALLMASALAGAAAG) form the signal peptide. Residues 24–192 (GDIVHHDDEA…PDRPVVDTAE (169 aa)) are Lumenal-facing. Asn-79 and Asn-145 each carry an N-linked (GlcNAc...) asparagine glycan. Residues 92–167 (CTSPKEKVSG…LPRDAGFALH (76 aa)) enclose the PA domain. The chain crosses the membrane as a helical span at residues 193 to 213 (VFLWLMAVGTVLCASYWSAWS). Residues 214–245 (AREALCEQEKLLKDGREVLLNVENGSSSGMID) lie on the Cytoplasmic side of the membrane. Residues 246–266 (INVASAIMFVVVASCFLIMLY) traverse the membrane as a helical segment. The Lumenal portion of the chain corresponds to 267–275 (KMMSSWFVE). A helical transmembrane segment spans residues 276–296 (LLVVIFCVGGVEGLQTCLVAL). The Cytoplasmic portion of the chain corresponds to 297-316 (LSRWFRAASESFFKVPFFGA). A helical membrane pass occupies residues 317-337 (VSYLTLAVSPFCIVFAVLWAV). The Lumenal portion of the chain corresponds to 338–342 (HRHFT). The chain crosses the membrane as a helical span at residues 343 to 363 (YAWIGQDILGIALIITVIQIV). Residues 364-367 (RVPN) lie on the Cytoplasmic side of the membrane. The helical transmembrane segment at 368–388 (LKVGSVLLSCAFFYDIFWVFV) threads the bilayer. Asp-382 is an active-site residue. Over 389–426 (SKRWFHESVMIVVARGDKTDEDGVPMLLKIPRMFDPWG) the chain is Lumenal. The helical transmembrane segment at 427–447 (GYSIIGFGDILLPGLLVAFAL) threads the bilayer. The active site involves Asp-435. Residues 448–459 (RYDWAAKKSLQT) are Cytoplasmic-facing. The helical transmembrane segment at 460 to 480 (GYFLWSMVAYGSGLLITYVAL) threads the bilayer. Residues 481–486 (NLMDGH) lie on the Lumenal side of the membrane. A helical membrane pass occupies residues 487-507 (GQPALLYIVPFTLGALISLGW). A PAL motif is present at residues 489 to 491 (PAL). The Cytoplasmic segment spans residues 508-542 (KRGELWNLWSKGEPERVCPHHMHMQPQPKTPPLVQ).

Belongs to the peptidase A22B family. In terms of processing, glycosylated.

It is found in the endosome membrane. Intramembrane-cleaving aspartic protease (I-CLiP) that cleaves type II membrane signal peptides in the hydrophobic plane of the membrane. This is Signal peptide peptidase-like 5 (SPPL5) from Oryza sativa subsp. japonica (Rice).